The chain runs to 356 residues: Probable dual-specificity RNA methyltransferase RlmN (356 aa).

The active-site Proton acceptor is the Glu-92. Positions 98 to 336 constitute a Radical SAM core domain; sequence HKYGFSVCVT…CGVRLEHGTD (239 aa). Cysteines 105 and 341 form a disulfide. Residues Cys-112, Cys-116, and Cys-119 each contribute to the [4Fe-4S] cluster site. S-adenosyl-L-methionine contacts are provided by residues 164 to 165, Ser-196, 219 to 221, and Asn-297; these read GE and SLH. Cys-341 acts as the S-methylcysteine intermediate in catalysis.

This sequence belongs to the radical SAM superfamily. RlmN family. [4Fe-4S] cluster is required as a cofactor.

It localises to the cytoplasm. The enzyme catalyses adenosine(2503) in 23S rRNA + 2 reduced [2Fe-2S]-[ferredoxin] + 2 S-adenosyl-L-methionine = 2-methyladenosine(2503) in 23S rRNA + 5'-deoxyadenosine + L-methionine + 2 oxidized [2Fe-2S]-[ferredoxin] + S-adenosyl-L-homocysteine. It carries out the reaction adenosine(37) in tRNA + 2 reduced [2Fe-2S]-[ferredoxin] + 2 S-adenosyl-L-methionine = 2-methyladenosine(37) in tRNA + 5'-deoxyadenosine + L-methionine + 2 oxidized [2Fe-2S]-[ferredoxin] + S-adenosyl-L-homocysteine. Functionally, specifically methylates position 2 of adenine 2503 in 23S rRNA and position 2 of adenine 37 in tRNAs. The chain is Probable dual-specificity RNA methyltransferase RlmN from Shouchella clausii (strain KSM-K16) (Alkalihalobacillus clausii).